Consider the following 398-residue polypeptide: Succinate--CoA ligase [ADP-forming] subunit beta (398 aa).

An ATP-grasp domain is found at 9-254 (KRLLHEYGAP…TSEEDPKEIE (246 aa)). ATP is bound by residues K46, 53–55 (GRG), E109, A112, and E117. The Mg(2+) site is built by N209 and D223. Substrate-binding positions include N274 and 331 to 333 (GIM).

It belongs to the succinate/malate CoA ligase beta subunit family. In terms of assembly, heterotetramer of two alpha and two beta subunits. Mg(2+) serves as cofactor.

The catalysed reaction is succinate + ATP + CoA = succinyl-CoA + ADP + phosphate. It carries out the reaction GTP + succinate + CoA = succinyl-CoA + GDP + phosphate. The protein operates within carbohydrate metabolism; tricarboxylic acid cycle; succinate from succinyl-CoA (ligase route): step 1/1. Functionally, succinyl-CoA synthetase functions in the citric acid cycle (TCA), coupling the hydrolysis of succinyl-CoA to the synthesis of either ATP or GTP and thus represents the only step of substrate-level phosphorylation in the TCA. The beta subunit provides nucleotide specificity of the enzyme and binds the substrate succinate, while the binding sites for coenzyme A and phosphate are found in the alpha subunit. In Bartonella henselae (strain ATCC 49882 / DSM 28221 / CCUG 30454 / Houston 1) (Rochalimaea henselae), this protein is Succinate--CoA ligase [ADP-forming] subunit beta.